Consider the following 352-residue polypeptide: Pejvakin (352 aa).

Belongs to the gasdermin family. In terms of assembly, interacts with MAP1LC3B; interaction is direct. Interacts with IQGAP1. Interacts with ROCK2. Interacts with TRIOBP.

It is found in the peroxisome membrane. Its subcellular location is the cell projection. The protein resides in the cilium. Functionally, peroxisome-associated protein required to protect auditory hair cells against noise-induced damage. Acts by regulating noise-induced peroxisome proliferation in auditory hair cells and neurons, and promoting autophagic degradation of damaged peroxisomes (pexophagy). Noise overexposure increases reactive oxygen species (ROS) levels, causing oxidative damage to auditory hair cells and resulting in hearing loss. PJVK acts as a ROS sensor that recruits the autophagy machinery to trigger pexophagy of peroxisomes damaged by oxidative stress. In addition to pexophagy, also required to promote peroxisome proliferation in response to sound overstimulation. The polypeptide is Pejvakin (Homo sapiens (Human)).